Reading from the N-terminus, the 507-residue chain is Fatty acid resistance protein FarB (507 aa).

The next 14 membrane-spanning stretches (helical) occupy residues 8–28, 52–72, 78–98, 109–129, 136–156, 164–184, 199–219, 233–253, 274–294, 303–323, 334–354, 363–383, 399–419, and 478–498; these read GAAL…EVLD, WVIT…GFLA, VKLF…CGIA, ILQG…LMAS, MLAL…GPIL, WHWG…AWIT, PTDY…QMML, IITL…WELG, IATS…PLVL, AWAG…SPLI, LLVT…TDFY, IWPQ…LTTI, LSNF…STLW, and IFLA…LAKP.

This sequence belongs to the major facilitator superfamily. EmrB family. As to quaternary structure, probably part of a tripartite efflux system FarAB-MtrE, which is composed of an inner membrane transporter, FarB, a periplasmic membrane fusion protein, FarA, and an outer membrane component, MtrE.

Its subcellular location is the cell inner membrane. Mediates resistance to long-chained antibacterial fatty acids (FAs). Function is dependent on the MtrE outer membrane protein. The chain is Fatty acid resistance protein FarB from Neisseria gonorrhoeae.